The sequence spans 194 residues: Protein GrpE (194 aa).

Over residues 1–13 (MENTQENPTSQNP) the composition is skewed to polar residues. The tract at residues 1–50 (MENTQENPTSQNPKPAEETARQAAEAAAPQQEAAANAATDSPASAEQAAL) is disordered. The span at 21–50 (RQAAEAAAPQQEAAANAATDSPASAEQAAL) shows a compositional bias: low complexity.

This sequence belongs to the GrpE family. As to quaternary structure, homodimer.

It localises to the cytoplasm. In terms of biological role, participates actively in the response to hyperosmotic and heat shock by preventing the aggregation of stress-denatured proteins, in association with DnaK and GrpE. It is the nucleotide exchange factor for DnaK and may function as a thermosensor. Unfolded proteins bind initially to DnaJ; upon interaction with the DnaJ-bound protein, DnaK hydrolyzes its bound ATP, resulting in the formation of a stable complex. GrpE releases ADP from DnaK; ATP binding to DnaK triggers the release of the substrate protein, thus completing the reaction cycle. Several rounds of ATP-dependent interactions between DnaJ, DnaK and GrpE are required for fully efficient folding. This is Protein GrpE from Paraburkholderia xenovorans (strain LB400).